The sequence spans 135 residues: DNA-directed RNA polymerase subunit omega (135 aa).

This sequence belongs to the RNA polymerase subunit omega family. The RNAP catalytic core consists of 2 alpha, 1 beta, 1 beta' and 1 omega subunit. When a sigma factor is associated with the core the holoenzyme is formed, which can initiate transcription.

The catalysed reaction is RNA(n) + a ribonucleoside 5'-triphosphate = RNA(n+1) + diphosphate. Its function is as follows. Promotes RNA polymerase assembly. Latches the N- and C-terminal regions of the beta' subunit thereby facilitating its interaction with the beta and alpha subunits. The chain is DNA-directed RNA polymerase subunit omega from Rhizobium meliloti (strain 1021) (Ensifer meliloti).